The chain runs to 369 residues: Fructose-bisphosphate aldolase 2 (369 aa).

Dihydroxyacetone phosphate is bound at residue D40. D-glyceraldehyde 3-phosphate-binding residues include S42 and T45. R49 contacts beta-D-fructose 1,6-bisphosphate. K113 is a binding site for D-glyceraldehyde 3-phosphate. K152 contributes to the dihydroxyacetone phosphate binding site. E195 contacts D-glyceraldehyde 3-phosphate. E195 acts as the Proton acceptor in catalysis. The dihydroxyacetone phosphate site is built by K237, S279, and G280. K237 (schiff-base intermediate with dihydroxyacetone phosphate) is an active-site residue. Residues 279–281 and S307 contribute to the beta-D-fructose 1,6-bisphosphate site; that span reads SGG. Positions 309 and 310 each coordinate dihydroxyacetone phosphate. R310 contacts beta-D-fructose 1,6-bisphosphate.

The protein belongs to the class I fructose-bisphosphate aldolase family.

Its subcellular location is the cytoplasm. It localises to the membrane. The protein resides in the host cell membrane. It carries out the reaction beta-D-fructose 1,6-bisphosphate = D-glyceraldehyde 3-phosphate + dihydroxyacetone phosphate. The protein operates within carbohydrate degradation; glycolysis; D-glyceraldehyde 3-phosphate and glycerone phosphate from D-glucose: step 4/4. Plays a key role in glycolysis by catalyzing the cleavage of fructose 1,6-bisphosphate into dihydroxyacetone phosphate and glyceraldehyde 3-phosphate. The protein is Fructose-bisphosphate aldolase 2 (ALDO2) of Plasmodium berghei (strain Anka).